The sequence spans 235 residues: Elongation factor Tu, chloroplastic (235 aa).

Positions 1-125 (KNMITGAAQM…KVDSYIPTPQ (125 aa)) constitute a tr-type G domain. A GTP-binding site is contributed by 47–50 (NKED).

It belongs to the TRAFAC class translation factor GTPase superfamily. Classic translation factor GTPase family. EF-Tu/EF-1A subfamily.

Its subcellular location is the plastid. The protein localises to the chloroplast. The enzyme catalyses GTP + H2O = GDP + phosphate + H(+). GTP hydrolase that promotes the GTP-dependent binding of aminoacyl-tRNA to the A-site of ribosomes during protein biosynthesis. In Gonium pectorale (Green alga), this protein is Elongation factor Tu, chloroplastic (tufA).